A 314-amino-acid polypeptide reads, in one-letter code: ATP synthase gamma chain (314 aa).

This sequence belongs to the ATPase gamma chain family. F-type ATPases have 2 components, CF(1) - the catalytic core - and CF(0) - the membrane proton channel. CF(1) has five subunits: alpha(3), beta(3), gamma(1), delta(1), epsilon(1). CF(0) has three main subunits: a, b and c.

Its subcellular location is the cellular thylakoid membrane. Its function is as follows. Produces ATP from ADP in the presence of a proton gradient across the membrane. The gamma chain is believed to be important in regulating ATPase activity and the flow of protons through the CF(0) complex. This Rippkaea orientalis (strain PCC 8801 / RF-1) (Cyanothece sp. (strain PCC 8801)) protein is ATP synthase gamma chain.